The following is a 140-amino-acid chain: MTAQYYQLDEKFNQQTYEQYGKGLALNDLYIRRGASGSLVFNQDQQISGIFFAVASHSDPKPGEKTLVQLLRLPVDESTTATVKDNCVPYDLIFGNRNTTHYYTQFAKQHHTHLYEQIQQSNDQLIKFIDRKNVSCSMVS.

It belongs to the MG067/MG068/MG395 family.

This is an uncharacterized protein from Mycoplasma pneumoniae (strain ATCC 29342 / M129 / Subtype 1) (Mycoplasmoides pneumoniae).